The sequence spans 1379 residues: Vascular endothelial growth factor receptor 3 (1379 aa).

Residues 1-19 (MKRVCTLPLWLWLGIVSEA) form the signal peptide. Residues 20-788 (DLVSSYSMTP…EGSDDKTNVE (769 aa)) are Extracellular-facing. Ig-like C2-type domains are found at residues 30-136 (PTLS…TAVS), 160-222 (KENT…IDNK), 240-335 (DIQL…TDVI), 340-421 (PFIN…KRIS), 430-566 (PRIH…FYVT), 569-684 (PDGF…KYIS), and 691-777 (PRLK…ASVS). Cystine bridges form between Cys51–Cys120 and Cys167–Cys215. Positions 73–93 (RRWNSQPQQRPVGAGNPEEDC) are disordered. N-linked (GlcNAc...) asparagine glycosylation is found at Asn113, Asn175, Asn260, and Asn308. The cysteines at positions 261 and 319 are disulfide-linked. 3 disulfides stabilise this stretch: Cys453–Cys548, Cys474–Cys500, and Cys592–Cys666. Residues Asn529, Asn541, Asn596, Asn608, Asn655, Asn696, and Asn703 are each glycosylated (N-linked (GlcNAc...) asparagine). Cys712 and Cys761 are disulfide-bonded. The N-linked (GlcNAc...) asparagine glycan is linked to Asn771. The chain crosses the membrane as a helical span at residues 789–809 (IVILIGTGVIAVFFWILLIII). Topologically, residues 810–1379 (FCNIKRPAHA…LHASFFSEQY (570 aa)) are cytoplasmic. The Protein kinase domain maps to 858–1185 (LRLGKVLGHG…DLVEILGNLL (328 aa)). ATP is bound by residues 864-872 (LGHGAFGKV) and Lys892. Asp1049 serves as the catalytic Proton acceptor. Phosphotyrosine; by autocatalysis is present on residues Tyr1075 and Tyr1080. Positions 1196 to 1224 (YIPLNDSHSSEDDGFSQVPSSAQQNSDEE) are disordered. Tyr1239, Tyr1240, Tyr1274, Tyr1342, and Tyr1346 each carry phosphotyrosine; by autocatalysis. Positions 1299–1379 (RHRKEGGFSS…LHASFFSEQY (81 aa)) are disordered. Positions 1332–1343 (YGSQVGGQTFYN) are enriched in polar residues.

The protein belongs to the protein kinase superfamily. Tyr protein kinase family. CSF-1/PDGF receptor subfamily. As to quaternary structure, interacts with VEGFC and VEGFD. Monomer in the absence of bound VEGFC or VEGFD. Homodimer in the presence of bound VEGFC or VEGFD. In terms of processing, autophosphorylated on tyrosine residues upon ligand binding. Autophosphorylation occurs in trans, i.e. one subunit of the dimeric receptor phosphorylates tyrosine residues on the other subunit.

The protein resides in the cell membrane. Its subcellular location is the cytoplasm. The protein localises to the nucleus. It catalyses the reaction L-tyrosyl-[protein] + ATP = O-phospho-L-tyrosyl-[protein] + ADP + H(+). Its activity is regulated as follows. Present in an inactive conformation in the absence of bound ligand. Binding of VEGFC or VEGFD leads to dimerization and activation by autophosphorylation on tyrosine residues. Its function is as follows. Tyrosine-protein kinase that acts as a cell-surface receptor for VEGFC and VEGFD, and plays an essential role in lymphangiogenesis and in the development of the vascular network and the cardiovascular system during embryonic development. Promotes proliferation, survival and migration of endothelial cells, and regulates angiogenic sprouting. Mediates activation of the MAPK1/ERK2, MAPK3/ERK1 signaling pathway, of MAPK8 and the JUN signaling pathway, and of the AKT1 signaling pathway. This is Vascular endothelial growth factor receptor 3 (FLT4) from Coturnix coturnix (Common quail).